A 216-amino-acid polypeptide reads, in one-letter code: Uracil phosphoribosyltransferase (216 aa).

5-phospho-alpha-D-ribose 1-diphosphate contacts are provided by residues Arg-81, Arg-106, and 135–143 (DPMLATGSS). Uracil is bound by residues Ile-200 and 205–207 (GDA). Asp-206 serves as a coordination point for 5-phospho-alpha-D-ribose 1-diphosphate.

The protein belongs to the UPRTase family. It depends on Mg(2+) as a cofactor.

It catalyses the reaction UMP + diphosphate = 5-phospho-alpha-D-ribose 1-diphosphate + uracil. It participates in pyrimidine metabolism; UMP biosynthesis via salvage pathway; UMP from uracil: step 1/1. Its activity is regulated as follows. Allosterically activated by GTP. Catalyzes the conversion of uracil and 5-phospho-alpha-D-ribose 1-diphosphate (PRPP) to UMP and diphosphate. In Porphyromonas gingivalis (strain ATCC 33277 / DSM 20709 / CIP 103683 / JCM 12257 / NCTC 11834 / 2561), this protein is Uracil phosphoribosyltransferase (upp).